Consider the following 365-residue polypeptide: Chorismate synthase (365 aa).

Arg-48 contributes to the NADP(+) binding site. Residues 125–127, 238–239, Gly-278, 293–297, and Arg-319 contribute to the FMN site; these read RSS, NA, and KPTSS.

The protein belongs to the chorismate synthase family. Homotetramer. It depends on FMNH2 as a cofactor.

It catalyses the reaction 5-O-(1-carboxyvinyl)-3-phosphoshikimate = chorismate + phosphate. The protein operates within metabolic intermediate biosynthesis; chorismate biosynthesis; chorismate from D-erythrose 4-phosphate and phosphoenolpyruvate: step 7/7. Functionally, catalyzes the anti-1,4-elimination of the C-3 phosphate and the C-6 proR hydrogen from 5-enolpyruvylshikimate-3-phosphate (EPSP) to yield chorismate, which is the branch point compound that serves as the starting substrate for the three terminal pathways of aromatic amino acid biosynthesis. This reaction introduces a second double bond into the aromatic ring system. The polypeptide is Chorismate synthase (Marinomonas sp. (strain MWYL1)).